A 118-amino-acid polypeptide reads, in one-letter code: Small ribosomal subunit protein uS13 (118 aa).

Residues 94–118 (GLPVRGQRTKTNARTRKGPRKPIKK) form a disordered region.

This sequence belongs to the universal ribosomal protein uS13 family. Part of the 30S ribosomal subunit. Forms a loose heterodimer with protein S19. Forms two bridges to the 50S subunit in the 70S ribosome.

In terms of biological role, located at the top of the head of the 30S subunit, it contacts several helices of the 16S rRNA. In the 70S ribosome it contacts the 23S rRNA (bridge B1a) and protein L5 of the 50S subunit (bridge B1b), connecting the 2 subunits; these bridges are implicated in subunit movement. Contacts the tRNAs in the A and P-sites. This chain is Small ribosomal subunit protein uS13, found in Haemophilus ducreyi (strain 35000HP / ATCC 700724).